The chain runs to 388 residues: Galactokinase (388 aa).

Substrate is bound at residue 33–36 (EHTD). Residues Ser67 and 125–131 (GSGLSSS) contribute to the ATP site. 2 residues coordinate Mg(2+): Ser131 and Glu163. Residue Asp175 is the Proton acceptor of the active site. Residue Tyr225 coordinates substrate.

The protein belongs to the GHMP kinase family. GalK subfamily.

Its subcellular location is the cytoplasm. It catalyses the reaction alpha-D-galactose + ATP = alpha-D-galactose 1-phosphate + ADP + H(+). It functions in the pathway carbohydrate metabolism; galactose metabolism. Its function is as follows. Catalyzes the transfer of the gamma-phosphate of ATP to D-galactose to form alpha-D-galactose-1-phosphate (Gal-1-P). The chain is Galactokinase from Lactobacillus helveticus (Lactobacillus suntoryeus).